A 630-amino-acid polypeptide reads, in one-letter code: DNA mismatch repair protein MutL (630 aa).

Disordered regions lie at residues 361-386 (VLSS…APAE) and 407-431 (FERK…GQAE). Residues 407–421 (FERKQEEEVGEERCS) show a composition bias toward basic and acidic residues.

The protein belongs to the DNA mismatch repair MutL/HexB family.

This protein is involved in the repair of mismatches in DNA. It is required for dam-dependent methyl-directed DNA mismatch repair. May act as a 'molecular matchmaker', a protein that promotes the formation of a stable complex between two or more DNA-binding proteins in an ATP-dependent manner without itself being part of a final effector complex. This chain is DNA mismatch repair protein MutL, found in Geobacillus kaustophilus (strain HTA426).